Consider the following 342-residue polypeptide: N-acetyl-gamma-glutamyl-phosphate reductase (342 aa).

The active site involves Cys-149.

Belongs to the NAGSA dehydrogenase family. Type 1 subfamily.

The protein resides in the cytoplasm. It catalyses the reaction N-acetyl-L-glutamate 5-semialdehyde + phosphate + NADP(+) = N-acetyl-L-glutamyl 5-phosphate + NADPH + H(+). The protein operates within amino-acid biosynthesis; L-arginine biosynthesis; N(2)-acetyl-L-ornithine from L-glutamate: step 3/4. Functionally, catalyzes the NADPH-dependent reduction of N-acetyl-5-glutamyl phosphate to yield N-acetyl-L-glutamate 5-semialdehyde. This is N-acetyl-gamma-glutamyl-phosphate reductase from Rhodobacter capsulatus (strain ATCC BAA-309 / NBRC 16581 / SB1003).